The chain runs to 1204 residues: DNA-directed RNA polymerase subunit beta' (1204 aa).

4 residues coordinate Zn(2+): C60, C62, C75, and C78. The Mg(2+) site is built by D449, D451, and D453. The Zn(2+) site is built by C819, C893, C900, and C903.

The protein belongs to the RNA polymerase beta' chain family. As to quaternary structure, the RNAP catalytic core consists of 2 alpha, 1 beta, 1 beta' and 1 omega subunit. When a sigma factor is associated with the core the holoenzyme is formed, which can initiate transcription. The cofactor is Mg(2+). It depends on Zn(2+) as a cofactor.

The catalysed reaction is RNA(n) + a ribonucleoside 5'-triphosphate = RNA(n+1) + diphosphate. Functionally, DNA-dependent RNA polymerase catalyzes the transcription of DNA into RNA using the four ribonucleoside triphosphates as substrates. The chain is DNA-directed RNA polymerase subunit beta' from Bacillus cytotoxicus (strain DSM 22905 / CIP 110041 / 391-98 / NVH 391-98).